A 341-amino-acid polypeptide reads, in one-letter code: Glycerol-3-phosphate dehydrogenase [NAD(P)+] (341 aa).

NADPH is bound by residues Ser-11, Trp-12, Arg-32, and Lys-106. Lys-106, Gly-137, and Thr-139 together coordinate sn-glycerol 3-phosphate. Ala-141 is an NADPH binding site. Residues Lys-192, Asp-245, Ser-255, Arg-256, and Asn-257 each coordinate sn-glycerol 3-phosphate. Catalysis depends on Lys-192, which acts as the Proton acceptor. Arg-256 provides a ligand contact to NADPH. Residues Val-280 and Glu-282 each contribute to the NADPH site.

The protein belongs to the NAD-dependent glycerol-3-phosphate dehydrogenase family.

Its subcellular location is the cytoplasm. The catalysed reaction is sn-glycerol 3-phosphate + NAD(+) = dihydroxyacetone phosphate + NADH + H(+). It carries out the reaction sn-glycerol 3-phosphate + NADP(+) = dihydroxyacetone phosphate + NADPH + H(+). It participates in membrane lipid metabolism; glycerophospholipid metabolism. In terms of biological role, catalyzes the reduction of the glycolytic intermediate dihydroxyacetone phosphate (DHAP) to sn-glycerol 3-phosphate (G3P), the key precursor for phospholipid synthesis. This chain is Glycerol-3-phosphate dehydrogenase [NAD(P)+], found in Exiguobacterium sp. (strain ATCC BAA-1283 / AT1b).